Reading from the N-terminus, the 175-residue chain is Protein-export protein SecB (175 aa).

A compositionally biased stretch (polar residues) spans 153–163 (QQQPDAANGND). Residues 153 to 175 (QQQPDAANGNDSGIILPPGATRQ) form a disordered region.

The protein belongs to the SecB family. As to quaternary structure, homotetramer, a dimer of dimers. One homotetramer interacts with 1 SecA dimer.

The protein localises to the cytoplasm. Its function is as follows. One of the proteins required for the normal export of preproteins out of the cell cytoplasm. It is a molecular chaperone that binds to a subset of precursor proteins, maintaining them in a translocation-competent state. It also specifically binds to its receptor SecA. In Bordetella bronchiseptica (strain ATCC BAA-588 / NCTC 13252 / RB50) (Alcaligenes bronchisepticus), this protein is Protein-export protein SecB.